Reading from the N-terminus, the 125-residue chain is Glycine cleavage system H protein (125 aa).

A Lipoyl-binding domain is found at 23 to 103; it reads TALVGITDFA…PYNAWLIKMK (81 aa). N6-lipoyllysine is present on K64.

This sequence belongs to the GcvH family. As to quaternary structure, the glycine cleavage system is composed of four proteins: P, T, L and H. Requires (R)-lipoate as cofactor.

The glycine cleavage system catalyzes the degradation of glycine. The H protein shuttles the methylamine group of glycine from the P protein to the T protein. This Chlorobium chlorochromatii (strain CaD3) protein is Glycine cleavage system H protein.